The following is a 70-amino-acid chain: Small ribosomal subunit protein bS21 (70 aa).

Belongs to the bacterial ribosomal protein bS21 family.

In Polynucleobacter asymbioticus (strain DSM 18221 / CIP 109841 / QLW-P1DMWA-1) (Polynucleobacter necessarius subsp. asymbioticus), this protein is Small ribosomal subunit protein bS21.